The following is a 474-amino-acid chain: Glutamate--tRNA ligase (474 aa).

The 'HIGH' region motif lies at 9–19 (PSPTGYLHVGG). Positions 240-244 (KLSKR) match the 'KMSKS' region motif. Lys-243 lines the ATP pocket.

It belongs to the class-I aminoacyl-tRNA synthetase family. Glutamate--tRNA ligase type 1 subfamily. In terms of assembly, monomer.

Its subcellular location is the cytoplasm. The catalysed reaction is tRNA(Glu) + L-glutamate + ATP = L-glutamyl-tRNA(Glu) + AMP + diphosphate. Functionally, catalyzes the attachment of glutamate to tRNA(Glu) in a two-step reaction: glutamate is first activated by ATP to form Glu-AMP and then transferred to the acceptor end of tRNA(Glu). This is Glutamate--tRNA ligase from Aliivibrio fischeri (strain MJ11) (Vibrio fischeri).